The sequence spans 217 residues: 3,4-dihydroxy-2-butanone 4-phosphate synthase (217 aa).

Residues 37–38 (RE), D42, 150–154 (RRGHT), and E174 each bind D-ribulose 5-phosphate. E38 is a binding site for Mg(2+). Position 153 (H153) interacts with Mg(2+).

This sequence belongs to the DHBP synthase family. In terms of assembly, homodimer. It depends on Mg(2+) as a cofactor. Mn(2+) is required as a cofactor.

It carries out the reaction D-ribulose 5-phosphate = (2S)-2-hydroxy-3-oxobutyl phosphate + formate + H(+). Its pathway is cofactor biosynthesis; riboflavin biosynthesis; 2-hydroxy-3-oxobutyl phosphate from D-ribulose 5-phosphate: step 1/1. Functionally, catalyzes the conversion of D-ribulose 5-phosphate to formate and 3,4-dihydroxy-2-butanone 4-phosphate. The sequence is that of 3,4-dihydroxy-2-butanone 4-phosphate synthase from Serratia proteamaculans (strain 568).